The primary structure comprises 331 residues: Cytosolic sulfotransferase 8 (331 aa).

Over residues 1–11 (MGEKDIPRNLK) the composition is skewed to basic and acidic residues. A disordered region spans residues 1–31 (MGEKDIPRNLKEEEEEEEENQSEETKSLISS). Residues 12-22 (EEEEEEEENQS) are compositionally biased toward acidic residues. 80 to 85 (KSGTTW) contributes to the 3'-phosphoadenylyl sulfate binding site. Catalysis depends on His-145, which acts as the Proton acceptor. 3'-phosphoadenylyl sulfate contacts are provided by residues Arg-167, Ser-175, Tyr-231, and 297 to 299 (RKG).

Belongs to the sulfotransferase 1 family. As to expression, expressed in seedlings and roots.

Its subcellular location is the cytoplasm. Sulfotransferase that utilizes 3'-phospho-5'-adenylyl sulfate (PAPS) as sulfonate donor. No activity with brassinosteroids. This chain is Cytosolic sulfotransferase 8 (SOT8), found in Arabidopsis thaliana (Mouse-ear cress).